We begin with the raw amino-acid sequence, 873 residues long: Ectonucleotide pyrophosphatase/phosphodiesterase family member 3 (873 aa).

Residues 1–11 (MESMLTLAMEQ) are Cytoplasmic-facing. Residues 12–30 (PVKRNTLKKYKIACIVLLA) traverse the membrane as a helical; Signal-anchor for type II membrane protein segment. Residues 31–873 (LLVIVSLGLG…TYLPTFETTI (843 aa)) are Extracellular-facing. 2 consecutive SMB domains span residues 51–93 (QGSC…VEST) and 94–138 (RIWM…GETS). 10 disulfide bridges follow: C54/C71, C58/C89, C69/C82, C75/C81, C98/C115, C103/C133, C113/C126, C119/C125, C144/C190, and C152/C364. The Cell attachment site signature appears at 78 to 80 (RGD). Residues 160 to 544 (PVILFSMDGF…HGSLNHLLKV (385 aa)) are phosphodiesterase. Position 167 (D167) interacts with Zn(2+). An ATP-binding site is contributed by K204. A Zn(2+)-binding site is contributed by T205. The active-site Nucleophile is T205. Position 226 (N226) interacts with ATP. An N-linked (GlcNAc...) asparagine glycan is attached at N236. Position 275 (E275) interacts with ATP. N-linked (GlcNAc...) asparagine glycosylation is present at N279. ATP is bound at residue Y289. Residue N290 is glycosylated (N-linked (GlcNAc...) asparagine). Residues D325, H329, D372, and H373 each contribute to the Zn(2+) site. Intrachain disulfides connect C380–C477, C428–C816, C561–C621, C573–C677, C575–C662, and C785–C795. A glycan (N-linked (GlcNAc...) asparagine) is linked at N425. H482 is a binding site for Zn(2+). N532, N592, N685, and N697 each carry an N-linked (GlcNAc...) asparagine glycan. The nuclease stretch occupies residues 580–873 (NSIQLEQVNQ…TYLPTFETTI (294 aa)). Residues D750, N752, D754, H756, and D758 each coordinate Ca(2+). An N-linked (GlcNAc...) asparagine glycan is attached at N787.

In terms of assembly, monomer and homodimer. Requires Zn(2+) as cofactor. N-glycosylated. N-glycosylation is necessary for normal transport to the cell membrane, but is not the apical targeting signal.

It is found in the cell membrane. The protein resides in the apical cell membrane. Its subcellular location is the secreted. It catalyses the reaction a ribonucleoside 5'-triphosphate + H2O = a ribonucleoside 5'-phosphate + diphosphate + H(+). It carries out the reaction ATP + H2O = AMP + diphosphate + H(+). The catalysed reaction is CTP + H2O = CMP + diphosphate + H(+). The enzyme catalyses GTP + H2O = GMP + diphosphate + H(+). It catalyses the reaction UTP + H2O = UMP + diphosphate + H(+). It carries out the reaction UDP-N-acetyl-alpha-D-glucosamine + H2O = N-acetyl-alpha-D-glucosamine 1-phosphate + UMP + 2 H(+). The catalysed reaction is P(1),P(3)-bis(5'-adenosyl) triphosphate + H2O = AMP + ADP + 2 H(+). The enzyme catalyses P(1),P(4)-bis(5'-adenosyl) tetraphosphate + H2O = AMP + ATP + 2 H(+). It catalyses the reaction P(1),P(5)-bis(5'-adenosyl) pentaphosphate + H2O = adenosine 5'-tetraphosphate + AMP + 2 H(+). It carries out the reaction P(1),P(4)-bis(5'-guanosyl) tetraphosphate + H2O = GMP + GTP + 2 H(+). The catalysed reaction is Hydrolytically removes 5'-nucleotides successively from the 3'-hydroxy termini of 3'-hydroxy-terminated oligonucleotides.. In terms of biological role, hydrolase that metabolizes extracellular nucleotides, including ATP, GTP, UTP and CTP. Limits mast cells and basophils response during inflammation and during the chronic phases of allergic responses by eliminating extracellular ATP, a signaling molecule activating these cells in an autocrine manner. Metabolizes extracellular ATP in the lumen of the small intestine, and thereby prevents ATP-induced apoptosis of intestinal plasmacytoid dendritic cells. Has a broad specificity and can also hydrolyze UDP-GlcNAc into UMP and GlcNAc-1-phosphate and potentially several other intracellular nucleotide sugars, including UDP-GalNAc, CMP-NeuAc, GDP-Fuc, and UDP-GlcA. Thereby, could modulate glycan biosynthesis and protein glycosylation. Can hydrolyze extracellular dinucleoside polyphosphates, including the vasoactive adenosine polyphosphates as well. In addition, displays an alkaline phosphodiesterase activity in vitro. In Pongo abelii (Sumatran orangutan), this protein is Ectonucleotide pyrophosphatase/phosphodiesterase family member 3.